The sequence spans 541 residues: Beta-hexosaminidase 1 (541 aa).

The signal sequence occupies residues 1-20 (MSTNLLRLILLFITLSITSS). 2 N-linked (GlcNAc...) asparagine glycosylation sites follow: Asn44 and Asn304. Cys295 and Cys337 form a disulfide bridge. Glu332 serves as the catalytic Proton donor. Asn340, Asn352, and Asn497 each carry an N-linked (GlcNAc...) asparagine glycan. Residues Cys511 and Cys538 are joined by a disulfide bond.

The protein belongs to the glycosyl hydrolase 20 family. N-glycosylated. In terms of tissue distribution, expressed in roots, leaves, stems, flowers and siliques.

The protein resides in the vacuole. It catalyses the reaction Hydrolysis of terminal non-reducing N-acetyl-D-hexosamine residues in N-acetyl-beta-D-hexosaminides.. Its activity is regulated as follows. Inhibited by N-acetylcastanospermine, 2-acet-amido-1,2-dideoxynojirimycin and PUGNAc. Functionally, has a broad substrate specificity. Can use synthetic substrates such as pyridylaminated chitotriose, pyridylaminated chitobiose, p-nitrophenyl-beta-N-acetylglucosaminide, p-nitrophenyl-2-acetamido-2-deoxy-beta-D-glucopyranoside (pNP-GlcNAc), p-nitrophenyl-2-acetamido-2-deoxy-beta-D-galactopyranoside (pNP-GalNAc), 4-methylumbelliferyl-2-acetamido-2-deoxy-beta-D-glucopyranoside (MU-GlcNAc), and 4-methylumbelliferyl-6-sulfo-2-acetamido-2-deoxy-beta-D-glucopyranoside (MU-GlcNAc-6SO(4)) as substrates. Removes terminal GlcNAc residues from alpha1,3- and alpha1,6-mannosyl branches of biantennary N-glycans without any strict branch preference. Required for the presence of paucimannosidic N-glycans in glycoproteins of roots and, to a lower extent, of leaves. In Arabidopsis thaliana (Mouse-ear cress), this protein is Beta-hexosaminidase 1 (HEXO1).